Reading from the N-terminus, the 306-residue chain is Probable pinoresinol-lariciresinol reductase 3 (306 aa).

Residues 14–20, Arg39, and Lys46 each bind NADP(+); that span reads GATGRLG. Catalysis depends on Lys131, which acts as the Proton acceptor. Arg135 is an NADP(+) binding site.

This sequence belongs to the NmrA-type oxidoreductase family. Isoflavone reductase subfamily. Dimer.

Probable reductase that might be involved in the reduction of lariciresinol into secoisolariciresinol. In most plant species, a single enzyme is able to reduce both pinoresinol and lariciresinol efficiently while in Arabidopsis, PRR1 and PRR2 show a strict substrate selectivity for pinoresinol. This Arabidopsis thaliana (Mouse-ear cress) protein is Probable pinoresinol-lariciresinol reductase 3 (PLR3).